We begin with the raw amino-acid sequence, 588 residues long: Ankyrin repeat and SOCS box protein 15 (588 aa).

ANK repeat units lie at residues 75–104 (KGWF…KTLW), 110–139 (DGET…WPNT), 143–172 (KGET…SLDQ), 176–205 (KRWS…NVHL), 209–238 (FGVT…DVLA), 242–271 (DGAS…SGNI), 275–304 (AGHL…KHAI), 307–336 (SGLT…DVNS), 349–378 (ERKT…DPNL), 379–408 (DPLN…NVNC), and 416–444 (TRFP…QVEM). An SOCS box domain is found at 524–579 (WPEIRQILENPCSLKHLCRLKIRRLMGLQRLCQPTLMEKLSLPPTIQRYILFKEYD).

Belongs to the ankyrin SOCS box (ASB) family.

The protein operates within protein modification; protein ubiquitination. In terms of biological role, may be a substrate-recognition component of a SCF-like ECS (Elongin-Cullin-SOCS-box protein) E3 ubiquitin-protein ligase complex which mediates the ubiquitination and subsequent proteasomal degradation of target proteins. In Bos taurus (Bovine), this protein is Ankyrin repeat and SOCS box protein 15 (ASB15).